Reading from the N-terminus, the 285-residue chain is Urease accessory protein UreD (285 aa).

The protein belongs to the UreD family. In terms of assembly, ureD, UreF and UreG form a complex that acts as a GTP-hydrolysis-dependent molecular chaperone, activating the urease apoprotein by helping to assemble the nickel containing metallocenter of UreC. The UreE protein probably delivers the nickel.

It localises to the cytoplasm. In terms of biological role, required for maturation of urease via the functional incorporation of the urease nickel metallocenter. The sequence is that of Urease accessory protein UreD from Cenarchaeum symbiosum (strain A).